The following is a 284-amino-acid chain: MAERGGEGGAERGGDRGDFGRGFGGGRGGGRGRDRGPRGRGRRGGRASEETKWVPVTKLGRLVADNKITKLEQIYLHSLPVKEYQIIDHLVGPTLKDEVMKIMPVQKQTRAGQRTRFKAFVVVGDGNGHVGLGVKCSKEVATAIRGAIILAKLSVVPVRRGYWGNKIGKPHTVPCKVTGKCGSVTVRMVPAPRGSGIVAARVPKKVLQFAGIDDVFTSSRGSTKTLGNFVKATFDCLQKTYGFLTPEFWKETRFSRSPYQEHTDFLSTKAVSATKVITEGEDQA.

Residues 1 to 19 show a composition bias toward basic and acidic residues; it reads MAERGGEGGAERGGDRGDF. The segment at 1–51 is disordered; that stretch reads MAERGGEGGAERGGDRGDFGRGFGGGRGGGRGRDRGPRGRGRRGGRASEET. A compositionally biased stretch (gly residues) spans 20–29; sequence GRGFGGGRGG. The 64-residue stretch at 95-158 folds into the S5 DRBM domain; the sequence is LKDEVMKIMP…ILAKLSVVPV (64 aa).

It belongs to the universal ribosomal protein uS5 family.

This chain is Small ribosomal subunit protein uS5z (RPS2A), found in Arabidopsis thaliana (Mouse-ear cress).